Here is a 111-residue protein sequence, read N- to C-terminus: Beta-microseminoprotein (111 aa).

Positions 1–20 (MKFLLGTLVVLATFVTLCNS) are cleaved as a signal peptide. Gln-21 carries the pyrrolidone carboxylic acid modification. Intrachain disulfides connect Cys-22–Cys-67, Cys-35–Cys-59, Cys-54–Cys-90, Cys-57–Cys-66, and Cys-81–Cys-104.

The protein belongs to the beta-microseminoprotein family. In terms of assembly, homodimer; Interacts with PI16. In terms of tissue distribution, corpora lutea, mostly in the luteal cells surrounding blood vessels.

It localises to the secreted. This Sus scrofa (Pig) protein is Beta-microseminoprotein (MSMB).